A 65-amino-acid chain; its full sequence is Small ribosomal subunit protein bS21 (65 aa).

The disordered stretch occupies residues 45 to 65 (GRLKRSRSRRRAQRANEERNS). Residues 48–57 (KRSRSRRRAQ) show a composition bias toward basic residues.

Belongs to the bacterial ribosomal protein bS21 family.

The polypeptide is Small ribosomal subunit protein bS21 (Chlorobium phaeobacteroides (strain DSM 266 / SMG 266 / 2430)).